A 126-amino-acid polypeptide reads, in one-letter code: Large ribosomal subunit protein eL28 (126 aa).

Ser-2 is modified (N-acetylserine).

It belongs to the eukaryotic ribosomal protein eL28 family.

The sequence is that of Large ribosomal subunit protein eL28 (rpl-28) from Caenorhabditis elegans.